The primary structure comprises 327 residues: GMP reductase (327 aa).

The active-site Thioimidate intermediate is the Cys-176. NADP(+) is bound at residue 205 to 228 (IIADGGIRTHGDIAKSIRFGASMV).

This sequence belongs to the IMPDH/GMPR family. GuaC type 2 subfamily.

It catalyses the reaction IMP + NH4(+) + NADP(+) = GMP + NADPH + 2 H(+). Functionally, catalyzes the irreversible NADPH-dependent deamination of GMP to IMP. It functions in the conversion of nucleobase, nucleoside and nucleotide derivatives of G to A nucleotides, and in maintaining the intracellular balance of A and G nucleotides. The polypeptide is GMP reductase (Streptococcus agalactiae serotype III (strain NEM316)).